The chain runs to 435 residues: Asparagine--tRNA ligase (435 aa).

The protein belongs to the class-II aminoacyl-tRNA synthetase family. In terms of assembly, homodimer.

The protein resides in the cytoplasm. It catalyses the reaction tRNA(Asn) + L-asparagine + ATP = L-asparaginyl-tRNA(Asn) + AMP + diphosphate + H(+). This chain is Asparagine--tRNA ligase, found in Leptospira borgpetersenii serovar Hardjo-bovis (strain JB197).